The primary structure comprises 93 residues: Putative regulatory protein Amet_2791 (93 aa).

This sequence belongs to the RemA family.

The chain is Putative regulatory protein Amet_2791 from Alkaliphilus metalliredigens (strain QYMF).